Here is a 302-residue protein sequence, read N- to C-terminus: Putative RING-H2 finger protein ATL35 (302 aa).

The first 31 residues, Met1–Cys31, serve as a signal peptide directing secretion. A helical membrane pass occupies residues Thr50–Leu70. An RING-type; atypical zinc finger spans residues Cys123–Arg165. Ser226 carries the phosphoserine modification.

The protein belongs to the RING-type zinc finger family. ATL subfamily.

It is found in the membrane. It carries out the reaction S-ubiquitinyl-[E2 ubiquitin-conjugating enzyme]-L-cysteine + [acceptor protein]-L-lysine = [E2 ubiquitin-conjugating enzyme]-L-cysteine + N(6)-ubiquitinyl-[acceptor protein]-L-lysine.. It functions in the pathway protein modification; protein ubiquitination. This Arabidopsis thaliana (Mouse-ear cress) protein is Putative RING-H2 finger protein ATL35 (ATL35).